Reading from the N-terminus, the 909-residue chain is Ribosome-releasing factor 2, mitochondrial (909 aa).

The transit peptide at 1 to 15 (MVAAPLLRAHQAARL) directs the protein to the mitochondrion. Residues 57 to 367 (DRTRNIGIIA…AVTNLLPSPP (311 aa)) form the tr-type G domain. Position 66-73 (66-73 (AHIDAGKT)) interacts with GTP. Residues 121 to 148 (WPPQTAGDGNTTPQEPQTPRSASSHTVN) form a disordered region. A compositionally biased stretch (polar residues) spans 127–148 (GDGNTTPQEPQTPRSASSHTVN). Residues 151-155 (DTPGH) and 205-208 (NKLD) each bind GTP.

It belongs to the TRAFAC class translation factor GTPase superfamily. Classic translation factor GTPase family. EF-G/EF-2 subfamily.

It is found in the mitochondrion. Mitochondrial GTPase that mediates the disassembly of ribosomes from messenger RNA at the termination of mitochondrial protein biosynthesis. Not involved in the GTP-dependent ribosomal translocation step during translation elongation. This chain is Ribosome-releasing factor 2, mitochondrial (mef2), found in Aspergillus flavus (strain ATCC 200026 / FGSC A1120 / IAM 13836 / NRRL 3357 / JCM 12722 / SRRC 167).